A 130-amino-acid chain; its full sequence is Small ribosomal subunit protein uS8 (130 aa).

It belongs to the universal ribosomal protein uS8 family.

The sequence is that of Small ribosomal subunit protein uS8 (RPS22) from Kluyveromyces marxianus (Yeast).